The chain runs to 313 residues: MAHSHSHTSSHLPEDNNARRLLYAFGVTAGFMLVEVVGGFLSGSLALLADAGHMLTDTAALLFALLAVQFSRRPPTIRHTFGWLRLTTLAAFVNAIALVVITILIVWEAIERFRTPRPVEGGMMMAIAVAGLLANILSFWLLHHGSEEKNLNVRAAALHVLGDLLGSVGAIIAALIIIWTGWTPADPILSILVSLLVLRSAWRLLKDSVNELLEGAPVSLDIAELKRRMCREIPEVRNVHHVHVWMVGEKPVMTLHVQVIPPHDHDALLDQIQHYLMDHYQIEHTTIQMEYQPCHRPDCHLNEGVSGHSHHHH.

Residues Met-1–Arg-20 are Cytoplasmic-facing. The helical transmembrane segment at Leu-21–Leu-41 threads the bilayer. Over Ser-42–Leu-47 the chain is Periplasmic. Residues Leu-48–Val-68 form a helical membrane-spanning segment. Topologically, residues Gln-69–Leu-89 are cytoplasmic. The chain crosses the membrane as a helical span at residues Ala-90–Ile-110. Topologically, residues Glu-111 to Gly-121 are periplasmic. A helical membrane pass occupies residues Gly-122 to Leu-142. The Cytoplasmic segment spans residues His-143–His-159. The helical transmembrane segment at Val-160 to Thr-180 threads the bilayer. Residue Gly-181 is a topological domain, periplasmic. Residues Trp-182–Trp-202 traverse the membrane as a helical segment. Topologically, residues Arg-203–His-313 are cytoplasmic.

It belongs to the cation diffusion facilitator (CDF) transporter (TC 2.A.4) family. SLC30A subfamily.

It is found in the cell inner membrane. Functionally, involved in zinc efflux across the cytoplasmic membrane, thus reducing zinc accumulation in the cytoplasm and rendering bacteria more resistant to zinc. It may contribute to zinc homeostasis at low concentrations of zinc. The chain is Zinc transporter ZitB (zitB) from Shigella flexneri.